A 78-amino-acid polypeptide reads, in one-letter code: Probable Fe(2+)-trafficking protein (78 aa).

Belongs to the Fe(2+)-trafficking protein family. Monomer.

Could be a mediator in iron transactions between iron acquisition and iron-requiring processes, such as synthesis and/or repair of Fe-S clusters in biosynthetic enzymes. The polypeptide is Probable Fe(2+)-trafficking protein (Wigglesworthia glossinidia brevipalpis).